Here is a 173-residue protein sequence, read N- to C-terminus: Crossover junction endodeoxyribonuclease RuvC (173 aa).

Active-site residues include aspartate 8, glutamate 67, and aspartate 139. Positions 8, 67, and 139 each coordinate Mg(2+).

It belongs to the RuvC family. Homodimer which binds Holliday junction (HJ) DNA. The HJ becomes 2-fold symmetrical on binding to RuvC with unstacked arms; it has a different conformation from HJ DNA in complex with RuvA. In the full resolvosome a probable DNA-RuvA(4)-RuvB(12)-RuvC(2) complex forms which resolves the HJ. Mg(2+) serves as cofactor.

It localises to the cytoplasm. It catalyses the reaction Endonucleolytic cleavage at a junction such as a reciprocal single-stranded crossover between two homologous DNA duplexes (Holliday junction).. The RuvA-RuvB-RuvC complex processes Holliday junction (HJ) DNA during genetic recombination and DNA repair. Endonuclease that resolves HJ intermediates. Cleaves cruciform DNA by making single-stranded nicks across the HJ at symmetrical positions within the homologous arms, yielding a 5'-phosphate and a 3'-hydroxyl group; requires a central core of homology in the junction. The consensus cleavage sequence is 5'-(A/T)TT(C/G)-3'. Cleavage occurs on the 3'-side of the TT dinucleotide at the point of strand exchange. HJ branch migration catalyzed by RuvA-RuvB allows RuvC to scan DNA until it finds its consensus sequence, where it cleaves and resolves the cruciform DNA. This is Crossover junction endodeoxyribonuclease RuvC from Salmonella choleraesuis (strain SC-B67).